The following is a 200-amino-acid chain: MTDQGLEGSNPVDLSKHPSGIVPTLQNIVSTVNLDCKLDLKAIALQARNAEYNPKRFAAVIMRIREPKTTALIFASGKMVCTGAKSEDFSKMAARKYARIVQKLGFPAKFKDFKIQNIVGSCDVKFPIRLEGLAYSHAAFSSYEPELFPGLIYRMKVPKIVLLIFVSGKIVITGAKMRDETYKAFENIYPVLSEFRKIQQ.

Position 2 is an N-acetylthreonine (T2). 2 consecutive repeat copies span residues 25-101 (LQNI…ARIV) and 115-192 (IQNI…YPVL).

Belongs to the TBP family. As to quaternary structure, belongs to the TFIID complex together with the TBP-associated factors (TAFs). Binds DNA as monomer. Interacts with TAF1 (via N-terminus). Interacts with MEE12/CCG1. Associates with PWP2 in the nucleus. Component of a nuclear protein complex containing at least TATA binding proteins (TBPs, e.g. TBP1 and TBP2) and ATX1.

The protein localises to the nucleus. In terms of biological role, general transcription factor that functions at the core of the DNA-binding multiprotein factor TFIID. Binding of TFIID to the TATA box is the initial transcriptional step of the pre-initiation complex (PIC), playing a role in the activation of eukaryotic genes transcribed by RNA polymerase II. In Arabidopsis thaliana (Mouse-ear cress), this protein is TATA-box-binding protein 1.